The following is a 273-amino-acid chain: Formamidopyrimidine-DNA glycosylase (273 aa).

The active-site Schiff-base intermediate with DNA is the proline 2. Glutamate 3 (proton donor) is an active-site residue. Lysine 58 (proton donor; for beta-elimination activity) is an active-site residue. Positions 91 and 110 each coordinate DNA. The FPG-type zinc-finger motif lies at 238–272 (QVYGKTGQPCPRCASMIVKIKLGGRGTHLCPHCQK). Residue arginine 262 is the Proton donor; for delta-elimination activity of the active site.

The protein belongs to the FPG family. As to quaternary structure, monomer. The cofactor is Zn(2+).

It carries out the reaction Hydrolysis of DNA containing ring-opened 7-methylguanine residues, releasing 2,6-diamino-4-hydroxy-5-(N-methyl)formamidopyrimidine.. The catalysed reaction is 2'-deoxyribonucleotide-(2'-deoxyribose 5'-phosphate)-2'-deoxyribonucleotide-DNA = a 3'-end 2'-deoxyribonucleotide-(2,3-dehydro-2,3-deoxyribose 5'-phosphate)-DNA + a 5'-end 5'-phospho-2'-deoxyribonucleoside-DNA + H(+). Functionally, involved in base excision repair of DNA damaged by oxidation or by mutagenic agents. Acts as a DNA glycosylase that recognizes and removes damaged bases. Has a preference for oxidized purines, such as 7,8-dihydro-8-oxoguanine (8-oxoG). Has AP (apurinic/apyrimidinic) lyase activity and introduces nicks in the DNA strand. Cleaves the DNA backbone by beta-delta elimination to generate a single-strand break at the site of the removed base with both 3'- and 5'-phosphates. In Streptococcus thermophilus (strain CNRZ 1066), this protein is Formamidopyrimidine-DNA glycosylase.